The chain runs to 472 residues: Homeobox protein PKNOX2 (472 aa).

The tract at residues methionine 1–aspartate 62 is disordered. Residues aspartate 26–serine 38 are compositionally biased toward polar residues. Positions serine 46–valine 56 are enriched in low complexity. Positions glycine 96–aspartate 179 constitute an MEIS N-terminal domain. Residues lysine 291–methionine 350 constitute a DNA-binding region (homeobox). 3 disordered regions span residues leucine 351–proline 371, glutamine 386–leucine 405, and methionine 422–glutamate 472. Residues lysine 361–proline 371 show a composition bias toward basic residues. Over residues leucine 429–glutamate 454 the composition is skewed to acidic residues.

Belongs to the TALE/MEIS homeobox family.

The protein localises to the nucleus. This Homo sapiens (Human) protein is Homeobox protein PKNOX2 (PKNOX2).